The following is a 340-amino-acid chain: DNA-directed RNA polymerase subunit alpha (340 aa).

An alpha N-terminal domain (alpha-NTD) region spans residues 1-233 (MIQDEIKVST…DLFIPLINSE (233 aa)). The segment at 265 to 340 (TKDVAFKHIF…IQLPKNKNYL (76 aa)) is alpha C-terminal domain (alpha-CTD).

It belongs to the RNA polymerase alpha chain family. As to quaternary structure, in plastids the minimal PEP RNA polymerase catalytic core is composed of four subunits: alpha, beta, beta', and beta''. When a (nuclear-encoded) sigma factor is associated with the core the holoenzyme is formed, which can initiate transcription.

Its subcellular location is the plastid. The protein localises to the chloroplast. The catalysed reaction is RNA(n) + a ribonucleoside 5'-triphosphate = RNA(n+1) + diphosphate. In terms of biological role, DNA-dependent RNA polymerase catalyzes the transcription of DNA into RNA using the four ribonucleoside triphosphates as substrates. The polypeptide is DNA-directed RNA polymerase subunit alpha (Marchantia polymorpha (Common liverwort)).